The sequence spans 253 residues: 5'-nucleotidase SurE (253 aa).

D8, D9, S39, and N91 together coordinate a divalent metal cation.

This sequence belongs to the SurE nucleotidase family. A divalent metal cation is required as a cofactor.

It is found in the cytoplasm. The enzyme catalyses a ribonucleoside 5'-phosphate + H2O = a ribonucleoside + phosphate. Functionally, nucleotidase that shows phosphatase activity on nucleoside 5'-monophosphates. This chain is 5'-nucleotidase SurE, found in Leptothrix cholodnii (strain ATCC 51168 / LMG 8142 / SP-6) (Leptothrix discophora (strain SP-6)).